The following is a 93-amino-acid chain: Small ribosomal subunit protein uS19 (93 aa).

The disordered stretch occupies residues 1-23; it reads MPRSLKKGPFVDDHLQKKVDAEN. Over residues 9–23 the composition is skewed to basic and acidic residues; that stretch reads PFVDDHLQKKVDAEN.

This sequence belongs to the universal ribosomal protein uS19 family.

In terms of biological role, protein S19 forms a complex with S13 that binds strongly to the 16S ribosomal RNA. The sequence is that of Small ribosomal subunit protein uS19 from Nocardioides sp. (strain ATCC BAA-499 / JS614).